Reading from the N-terminus, the 656-residue chain is UvrABC system protein C (656 aa).

The GIY-YIG domain occupies 16 to 95 (TDPGVYRFRD…IKEYSPRFNV (80 aa)). A UVR domain is found at 208-243 (GRFLRQLEAEMKQAAAAQEYERAARIRDDIQALRTV).

It belongs to the UvrC family. Interacts with UvrB in an incision complex.

The protein resides in the cytoplasm. Its function is as follows. The UvrABC repair system catalyzes the recognition and processing of DNA lesions. UvrC both incises the 5' and 3' sides of the lesion. The N-terminal half is responsible for the 3' incision and the C-terminal half is responsible for the 5' incision. The chain is UvrABC system protein C from Thermobifida fusca (strain YX).